Here is a 245-residue protein sequence, read N- to C-terminus: MTNLLPEMAEIWQQTLNWQPTDSQQARFQQLYELILEGNRQLNLTRITEPQEFWEKHLWDSLRGVAPQQQLISSLQLGASVIDIGTGAGFPGVPVAIIASNSTITLVDSTRKKITFIDTILSELALTNAKTLVSRAEEIGQQPQHREQYDVALIRAVGTASPCAEYTLPLLKLGGLAVIYRGTWTEEETTSVENAAQQLGGTVELIDNFTTPLTNSVRHCLYLRKVAKTPANFPRAVGVPSQKPI.

S-adenosyl-L-methionine-binding positions include G85, F90, 108–110 (DST), 136–137 (AE), and R155.

This sequence belongs to the methyltransferase superfamily. RNA methyltransferase RsmG family.

It is found in the cytoplasm. Functionally, specifically methylates the N7 position of a guanine in 16S rRNA. The polypeptide is Ribosomal RNA small subunit methyltransferase G (Nostoc sp. (strain PCC 7120 / SAG 25.82 / UTEX 2576)).